The chain runs to 86 residues: Small ribosomal subunit protein bS16 (86 aa).

It belongs to the bacterial ribosomal protein bS16 family.

The chain is Small ribosomal subunit protein bS16 from Myxococcus xanthus (strain DK1622).